The chain runs to 421 residues: Adenylosuccinate synthetase (421 aa).

Residues 11–17 (GDEGKGK) and 39–41 (GHT) contribute to the GTP site. The Proton acceptor role is filled by D12. 2 residues coordinate Mg(2+): D12 and G39. IMP contacts are provided by residues 12–15 (DEGK), 37–40 (NAGH), T129, R143, N219, T234, and R298. H40 acts as the Proton donor in catalysis. 294–300 (VTTGRRR) contacts substrate. Residues R300, 326-328 (KLD), and 409-411 (GTG) contribute to the GTP site.

Belongs to the adenylosuccinate synthetase family. In terms of assembly, homodimer. Mg(2+) is required as a cofactor.

Its subcellular location is the cytoplasm. It catalyses the reaction IMP + L-aspartate + GTP = N(6)-(1,2-dicarboxyethyl)-AMP + GDP + phosphate + 2 H(+). Its pathway is purine metabolism; AMP biosynthesis via de novo pathway; AMP from IMP: step 1/2. Functionally, plays an important role in the de novo pathway and in the salvage pathway of purine nucleotide biosynthesis. Catalyzes the first committed step in the biosynthesis of AMP from IMP. The sequence is that of Adenylosuccinate synthetase from Paracoccidioides lutzii (strain ATCC MYA-826 / Pb01) (Paracoccidioides brasiliensis).